The sequence spans 766 residues: 5-methyltetrahydropteroyltriglutamate--homocysteine methyltransferase (766 aa).

5-methyltetrahydropteroyltri-L-glutamate contacts are provided by residues 16-19 (RELK) and Lys124. Residues 445 to 447 (IGS) and Glu498 each bind L-homocysteine. Residues 445-447 (IGS) and Glu498 each bind L-methionine. Residues 529 to 530 (RC) and Trp575 each bind 5-methyltetrahydropteroyltri-L-glutamate. L-homocysteine is bound at residue Asp613. Asp613 contacts L-methionine. Glu619 is a binding site for 5-methyltetrahydropteroyltri-L-glutamate. Residues His655, Cys657, and Glu679 each coordinate Zn(2+). The Proton donor role is filled by His708. A Zn(2+)-binding site is contributed by Cys740.

The protein belongs to the vitamin-B12 independent methionine synthase family. Requires Zn(2+) as cofactor.

The catalysed reaction is 5-methyltetrahydropteroyltri-L-glutamate + L-homocysteine = tetrahydropteroyltri-L-glutamate + L-methionine. It functions in the pathway amino-acid biosynthesis; L-methionine biosynthesis via de novo pathway; L-methionine from L-homocysteine (MetE route): step 1/1. Its function is as follows. Catalyzes the transfer of a methyl group from 5-methyltetrahydrofolate to homocysteine resulting in methionine formation. The polypeptide is 5-methyltetrahydropteroyltriglutamate--homocysteine methyltransferase (Pseudomonas syringae pv. tomato (strain ATCC BAA-871 / DC3000)).